Here is a 440-residue protein sequence, read N- to C-terminus: tRNA modification GTPase MnmE (440 aa).

(6S)-5-formyl-5,6,7,8-tetrahydrofolate is bound by residues Arg-23, Glu-80, and Lys-120. In terms of domain architecture, TrmE-type G spans 217–366 (GLKIVIAGEP…LLAMLQAHLP (150 aa)). Asn-227 contributes to the K(+) binding site. GTP contacts are provided by residues 227–232 (NAGKSS), 246–252 (TEIAGTT), and 271–274 (DTAG). Ser-231 is a binding site for Mg(2+). The K(+) site is built by Thr-246, Ile-248, and Thr-251. A Mg(2+)-binding site is contributed by Thr-252. Lys-440 contacts (6S)-5-formyl-5,6,7,8-tetrahydrofolate.

Belongs to the TRAFAC class TrmE-Era-EngA-EngB-Septin-like GTPase superfamily. TrmE GTPase family. As to quaternary structure, homodimer. Heterotetramer of two MnmE and two MnmG subunits. The cofactor is K(+).

The protein resides in the cytoplasm. Exhibits a very high intrinsic GTPase hydrolysis rate. Involved in the addition of a carboxymethylaminomethyl (cmnm) group at the wobble position (U34) of certain tRNAs, forming tRNA-cmnm(5)s(2)U34. The sequence is that of tRNA modification GTPase MnmE from Sinorhizobium medicae (strain WSM419) (Ensifer medicae).